Consider the following 858-residue polypeptide: Ubiquitin carboxyl-terminal hydrolase 5 (858 aa).

Position 2 is an N-acetylalanine (alanine 2). The disordered stretch occupies residues 74–96 (RRTRRPKEEDPATGTGDPPRKKP). Lysine 113 is covalently cross-linked (Glycyl lysine isopeptide (Lys-Gly) (interchain with G-Cter in SUMO)). Residues serine 149 and serine 156 each carry the phosphoserine modification. The UBP-type; degenerate zinc finger occupies 175–283 (QVSKHAFSLK…EHLSHFGIDM (109 aa)). Cysteine 195 and cysteine 816 form a disulfide bridge. Cysteine 199 and cysteine 202 together coordinate Zn(2+). Tryptophan 209 lines the substrate pocket. Cysteine 219 contacts Zn(2+). Residue 221-224 (RRYF) participates in substrate binding. Histidine 232 is a binding site for Zn(2+). Positions 259, 261, and 264 each coordinate substrate. Phosphothreonine is present on threonine 292. The region spanning 326–856 (TGIRNLGNSC…LGYIYFYQRV (531 aa)) is the USP domain. Cysteine 335 serves as the catalytic Nucleophile. Threonine 623 carries the phosphothreonine modification. 2 UBA domains span residues 654–695 (MLDE…VMSH) and 722–762 (PPPE…IFSH). Residues serine 779, serine 783, and serine 785 each carry the phosphoserine modification. Residue histidine 818 is the Proton acceptor of the active site.

Belongs to the peptidase C19 family. Homodimer. Interacts with TRIML1. In terms of processing, ubiquitinated by SMURF1; leading to proteasomal degradation. SUMOylated at Lys-113; SUMOylation affects the interaction with Cav3.2 channels.

The protein localises to the cytoplasm. The protein resides in the stress granule. It localises to the nucleus. The enzyme catalyses Thiol-dependent hydrolysis of ester, thioester, amide, peptide and isopeptide bonds formed by the C-terminal Gly of ubiquitin (a 76-residue protein attached to proteins as an intracellular targeting signal).. Its function is as follows. Deubiquitinating enzyme that participates in a wide range of cellular processes by specifically cleaving isopeptide bonds between ubiquitin and substrate proteins or ubiquitin itself. Affects thereby important cellular signaling pathways such as NF-kappa-B, Wnt/beta-catenin, and cytokine production by regulating ubiquitin-dependent protein degradation. Participates in the activation of the Wnt signaling pathway by promoting FOXM1 deubiquitination and stabilization that induces the recruitment of beta-catenin to Wnt target gene promoter. Regulates the assembly and disassembly of heat-induced stress granules by mediating the hydrolysis of unanchored ubiquitin chains. Promotes lipopolysaccharide-induced apoptosis and inflammatory response by stabilizing the TXNIP protein. Affects T-cell biology by stabilizing the inhibitory receptor on T-cells PDC1. Acts as a negative regulator of autophagy by regulating ULK1 at both protein and mRNA levels. Acts also as a negative regulator of type I interferon production by simultaneously removing both 'Lys-48'-linked unanchored and 'Lys-63'-linked anchored polyubiquitin chains on the transcription factor IRF3. Modulates the stability of DNA mismatch repair protein MLH1 and counteracts the effect of the ubiquitin ligase UBR4. Upon activation by insulin, it gets phosphorylated through mTORC1-mediated phosphorylation to enhance YTHDF1 stability by removing 'Lys-11'-linked polyubiquitination. May also deubiquitinate other substrates such as the calcium channel CACNA1H. This Homo sapiens (Human) protein is Ubiquitin carboxyl-terminal hydrolase 5 (USP5).